A 204-amino-acid polypeptide reads, in one-letter code: Colicin-A (204 aa).

A run of 2 helical transmembrane segments spans residues S139–Y161 and L165–I187.

The protein belongs to the channel forming colicin family.

The protein resides in the cell membrane. In terms of biological role, this colicin is a channel-forming colicin. This class of transmembrane toxins depolarize the cytoplasmic membrane, leading to dissipation of cellular energy. Functionally, colicins are polypeptide toxins produced by and active against E.coli and closely related bacteria. In Escherichia coli, this protein is Colicin-A (caa).